A 417-amino-acid polypeptide reads, in one-letter code: Serine hydroxymethyltransferase (417 aa).

(6S)-5,6,7,8-tetrahydrofolate contacts are provided by residues L121 and G125–L127. K229 is modified (N6-(pyridoxal phosphate)lysine). S355–F357 contributes to the (6S)-5,6,7,8-tetrahydrofolate binding site.

It belongs to the SHMT family. In terms of assembly, homodimer. Pyridoxal 5'-phosphate is required as a cofactor.

The protein resides in the cytoplasm. The catalysed reaction is (6R)-5,10-methylene-5,6,7,8-tetrahydrofolate + glycine + H2O = (6S)-5,6,7,8-tetrahydrofolate + L-serine. It functions in the pathway one-carbon metabolism; tetrahydrofolate interconversion. Its pathway is amino-acid biosynthesis; glycine biosynthesis; glycine from L-serine: step 1/1. Its function is as follows. Catalyzes the reversible interconversion of serine and glycine with tetrahydrofolate (THF) serving as the one-carbon carrier. This reaction serves as the major source of one-carbon groups required for the biosynthesis of purines, thymidylate, methionine, and other important biomolecules. Also exhibits THF-independent aldolase activity toward beta-hydroxyamino acids, producing glycine and aldehydes, via a retro-aldol mechanism. This Shewanella baltica (strain OS223) protein is Serine hydroxymethyltransferase.